The primary structure comprises 177 residues: Deoxyuridine 5'-triphosphate nucleotidohydrolase (177 aa).

Substrate-binding positions include 83–85, Asn96, 100–102, and Lys110; these read RSG and TID. The span at 150–163 shows a compositional bias: polar residues; it reads DLTSSQTDLSNQPN. The segment at 150 to 177 is disordered; the sequence is DLTSSQTDLSNQPNTGRGTGGFGSTGQK. The segment covering 166-177 has biased composition (gly residues); the sequence is RGTGGFGSTGQK.

Belongs to the dUTPase family. The cofactor is Mg(2+).

The catalysed reaction is dUTP + H2O = dUMP + diphosphate + H(+). It functions in the pathway pyrimidine metabolism; dUMP biosynthesis; dUMP from dCTP (dUTP route): step 2/2. Functionally, this enzyme is involved in nucleotide metabolism: it produces dUMP, the immediate precursor of thymidine nucleotides and it decreases the intracellular concentration of dUTP so that uracil cannot be incorporated into DNA. The sequence is that of Deoxyuridine 5'-triphosphate nucleotidohydrolase from Bartonella bacilliformis (strain ATCC 35685 / KC583 / Herrer 020/F12,63).